A 40-amino-acid polypeptide reads, in one-letter code: Light-harvesting protein B800/830/1020 beta-1 chain (40 aa).

The Cytoplasmic portion of the chain corresponds to 1 to 20; the sequence is ANDIRPLRDFEDEEAQEFHQ. Residues histidine 19 and histidine 37 each contribute to the a bacteriochlorophyll site. A helical transmembrane segment spans residues 21–40; it reads AAVQAFFLYVAVAFVAHLPV.

It belongs to the antenna complex beta subunit family. As to quaternary structure, the core complex is formed by different alpha and beta chains, binding bacteriochlorophyll molecules, and arranged most probably in tetrameric structures disposed around the reaction center. The non-pigmented gamma chains may constitute additional components.

The protein resides in the cell inner membrane. Functionally, antenna complexes are light-harvesting systems, which transfer the excitation energy to the reaction centers. The sequence is that of Light-harvesting protein B800/830/1020 beta-1 chain from Halorhodospira halochloris (Ectothiorhodospira halochloris).